The sequence spans 994 residues: MTRKENEESESLSSSSSPIDNSNNNNNNNNHSIFNPIGHIQNAFNNIDLNPLNVDFKGHTDKVVNFFQHGTGDLNDRMQGVVSKLRSNEYRKKMHSVLTKIKDTKEYKSTSNTDYDVIFESVDMYSNLQQDPTMDKDEIDVVTDLSSYKKKFTHWLGKERISTLLFIPTLGILIALMGILCDFLLMELGTLRDFVTSRHNSHVIPTDGTTPTPNSSIADKYDLVEGIVFVGYSVFFALISVCCISFISPYAVGSGIPEMKSIMSGINLSRVLGFKTLVSKIVGMVCASAAGLTIGRTGPFMHASAIISQMLMNLKVFGAIKKNQIVRYQMLICALTSGVVANFGAPIGGLLFAIEVTATTAVMGNLWKGFLCATTTAIIFFLSRSTFSKGNFHSVYEFEFVPKEYGVADLITFVGIGIITGLIGAFFVFIYEKLVRFRLRYPILKQSRIILVLVVSLFSAIITYSAGPLCRVSLPTAMKQFLGQNEPKPFLFEQDQTPYYKYLNLLVFIVVKLILTAFNIVLPIPGGAITPFIVTGAALGRLFGEILKDHFDSQAIEPAGFAAIASAGLVSGTIRNISPSIFVLELTGQLSLLVPILICSITSTAVGNFFNRPLFDTALKIQGLPFLSNYRSSKVYTMTAKQVMKKNINYLSMTSTVIEMKNFLDTFKYTFIPIVDSKENMLLVGIVERSSMIYMLDIHIENIEQKIDEFKSKYFVNNNNNNNNNNNNNNNNNNNNNNNNNNNNNNNNNNNNNNNNNNNNNSNNSENLEIENTGAILNTNSNNNNSDEEDYDRKDNDKISLIKPNQDESSSNSNGGSSSDFEEILNTQNTNINKNDNEDLIKEIEDENSSLGEKPIIEHDDEDDDEEEGDGIPLVSMKDQQPVLRNRHTTTTTTTTTTTPITENIYVNDAFEISINDLKNGGQSVWGKHILGDIIHSGETALLMDLAPSQVPDLTPLNKVFHLFTMLGLGFTYVTSLGKLVGVITKNSLMEQDL.

Residues 1-33 are disordered; sequence MTRKENEESESLSSSSSPIDNSNNNNNNNNHSI. Topologically, residues 1-163 are cytoplasmic; the sequence is MTRKENEESE…HWLGKERIST (163 aa). A compositionally biased stretch (low complexity) spans 11–32; the sequence is SLSSSSSPIDNSNNNNNNNNHS. A run of 11 helical transmembrane segments spans residues 164 to 184, 227 to 247, 271 to 291, 300 to 320, 334 to 354, 362 to 382, 410 to 430, 449 to 469, 505 to 525, 527 to 547, and 554 to 574; these read LLFIPTLGILIALMGILCDFL, IVFVGYSVFFALISVCCISFI, VLGFKTLVSKIVGMVCASAAG, FMHASAIISQMLMNLKVFGAI, ALTSGVVANFGAPIGGLLFAI, VMGNLWKGFLCATTTAIIFFL, LITFVGIGIITGLIGAFFVFI, IILVLVVSLFSAIITYSAGPL, LLVFIVVKLILTAFNIVLPIP, GAITPFIVTGAALGRLFGEIL, and QAIEPAGFAAIASAGLVSGTI. One can recognise a CBS 1 domain in the interval 644 to 705; the sequence is MKKNINYLSM…LDIHIENIEQ (62 aa). Disordered regions lie at residues 715 to 767, 802 to 822, and 846 to 872; these read FVNN…NSEN, IKPNQDESSSNSNGGSSSDFE, and DENSSLGEKPIIEHDDEDDDEEEGDGI. Composition is skewed to low complexity over residues 717–764 and 809–822; these read NNNN…NSNN and SSSNSNGGSSSDFE. The span at 859–870 shows a compositional bias: acidic residues; sequence HDDEDDDEEEGD. The 51-residue stretch at 944-994 folds into the CBS 2 domain; it reads MDLAPSQVPDLTPLNKVFHLFTMLGLGFTYVTSLGKLVGVITKNSLMEQDL.

The protein belongs to the chloride channel (TC 2.A.49) family.

The protein localises to the membrane. Functionally, voltage-gated chloride channel. Chloride channels may have several functions including the regulation of cell volume, membrane potential stabilization and signal transduction. In Dictyostelium discoideum (Social amoeba), this protein is Chloride channel protein E (clcE).